Here is a 170-residue protein sequence, read N- to C-terminus: Microfibrillar-associated protein 5 (170 aa).

Positions 1 to 20 (MTFFGPKVLLLLTALIMSSG) are cleaved as a signal peptide. The Cell attachment site signature appears at 30–32 (RGD). An N-linked (GlcNAc...) asparagine glycan is attached at Asn-76.

It belongs to the MFAP family. Interacts with TGFB2. Interacts with BMP2. Interacts with FBN1 (via N-terminal domain) and FBN2. Forms intermolecular disulfide bonds either with other MAGP-2 molecules or with other components of the microfibrils. As to expression, associated with fibrillin-containing microfibrils of the developing nuchal ligament.

Its subcellular location is the secreted. The protein resides in the extracellular space. The protein localises to the extracellular matrix. In terms of biological role, may play a role in hematopoiesis. In the cardiovascular system, could regulate growth factors or participate in cell signaling in maintaining large vessel integrity. Component of the elastin-associated microfibrils. The chain is Microfibrillar-associated protein 5 (MFAP5) from Bos taurus (Bovine).